We begin with the raw amino-acid sequence, 300 residues long: Ribosomal protein L11 methyltransferase (300 aa).

Residues Thr-152, Gly-173, Asp-195, and Asn-234 each coordinate S-adenosyl-L-methionine.

This sequence belongs to the methyltransferase superfamily. PrmA family.

The protein resides in the cytoplasm. It carries out the reaction L-lysyl-[protein] + 3 S-adenosyl-L-methionine = N(6),N(6),N(6)-trimethyl-L-lysyl-[protein] + 3 S-adenosyl-L-homocysteine + 3 H(+). Its function is as follows. Methylates ribosomal protein L11. The sequence is that of Ribosomal protein L11 methyltransferase from Paraburkholderia phymatum (strain DSM 17167 / CIP 108236 / LMG 21445 / STM815) (Burkholderia phymatum).